The primary structure comprises 148 residues: Large ribosomal subunit protein uL22c (148 aa).

This sequence belongs to the universal ribosomal protein uL22 family. As to quaternary structure, part of the 50S ribosomal subunit.

It localises to the plastid. Its subcellular location is the chloroplast. Its function is as follows. This protein binds specifically to 23S rRNA. The globular domain of the protein is located near the polypeptide exit tunnel on the outside of the subunit, while an extended beta-hairpin is found that lines the wall of the exit tunnel in the center of the 70S ribosome. This is Large ribosomal subunit protein uL22c (rpl22) from Triticum aestivum (Wheat).